Here is a 375-residue protein sequence, read N- to C-terminus: MPDVLDASPYDALLLLSFGGPEGPDDVVPFLENVTRGRGIPKERLKEVGQHYFLFGGVSPINDQNRALLDALRKDFAEHGLDLPVYWGNRNWAPYLTDTLREMVGDGRRRILVLATSAYASYSGCRQYRENLADALAALESEGLELPKIDKLRHYFNHPGFVEPMVDGVVRSLAELPAEVRDGAHIAFCTHSIPTSAADGSGPVEEHGDGGAYVRQHLDVARLIADAVRERTGVDHPWQLVYQSRSGAPHIPWLEPDICDHLEERQAAGVPAVVMAPIGFVSDHMEVLYDLDTEATAKAEELGLPVRRSATVGADPRFAAAVRDLVLERAGDERGQEVTPCALGTLGASHNLCPVGCCPARAPRPAAAGADSPYA.

Fe-coproporphyrin III contacts are provided by S59 and Y128. 2 residues coordinate Fe(2+): H191 and E286.

The protein belongs to the ferrochelatase family.

The protein resides in the cytoplasm. The catalysed reaction is Fe-coproporphyrin III + 2 H(+) = coproporphyrin III + Fe(2+). It functions in the pathway porphyrin-containing compound metabolism; protoheme biosynthesis. Involved in coproporphyrin-dependent heme b biosynthesis. Catalyzes the insertion of ferrous iron into coproporphyrin III to form Fe-coproporphyrin III. The chain is Coproporphyrin III ferrochelatase from Streptomyces coelicolor (strain ATCC BAA-471 / A3(2) / M145).